The chain runs to 341 residues: HTH-type transcriptional repressor PurR (341 aa).

The HTH lacI-type domain occupies 2–56; it reads ATIKDVAKRANVSTTTVSHVINKTRFVAEETRNAVWAAIKELHYSPSAVARSLKV. The H-T-H motif DNA-binding region spans 4–23; the sequence is IKDVAKRANVSTTTVSHVIN. The DNA-binding element occupies 48–56; the sequence is SAVARSLKV. Positions 73, 190, 192, 221, and 275 each coordinate hypoxanthine.

Homodimer.

The protein operates within purine metabolism; purine nucleotide biosynthesis [regulation]. Functionally, is the main repressor of the genes involved in the de novo synthesis of purine nucleotides, regulating purB, purC, purEK, purF, purHD, purL, purMN and guaBA expression. PurR is allosterically activated to bind its cognate DNA by binding the purine corepressors, hypoxanthine or guanine, thereby effecting transcription repression. The chain is HTH-type transcriptional repressor PurR from Klebsiella pneumoniae (strain 342).